The chain runs to 475 residues: Trigger factor (475 aa).

The region spanning 165-250 (GDRVTIDYLG…VKAVFRPDEL (86 aa)) is the PPIase FKBP-type domain. Residues 439 to 466 (EYDETDVPEEKPAKKKSAVKEKSAEKTS) show a composition bias toward basic and acidic residues. Residues 439–475 (EYDETDVPEEKPAKKKSAVKEKSAEKTSAKKKAPKKA) are disordered.

The protein belongs to the FKBP-type PPIase family. Tig subfamily.

The protein localises to the cytoplasm. The enzyme catalyses [protein]-peptidylproline (omega=180) = [protein]-peptidylproline (omega=0). Involved in protein export. Acts as a chaperone by maintaining the newly synthesized protein in an open conformation. Functions as a peptidyl-prolyl cis-trans isomerase. The chain is Trigger factor from Bartonella tribocorum (strain CIP 105476 / IBS 506).